A 163-amino-acid chain; its full sequence is Nucleotide-binding protein DET1318 (163 aa).

It belongs to the YajQ family.

Its function is as follows. Nucleotide-binding protein. This Dehalococcoides mccartyi (strain ATCC BAA-2266 / KCTC 15142 / 195) (Dehalococcoides ethenogenes (strain 195)) protein is Nucleotide-binding protein DET1318.